Reading from the N-terminus, the 410-residue chain is Lissencephaly-1 homolog A (410 aa).

The LisH domain maps to 7-39; the sequence is QRDELNRAIADYLRSNGYEEAYSVFKKEAELDM. A coiled-coil region spans residues 56–83; that stretch reads TSVIRLQKKVMELESKLNEAKEEINIGG. WD repeat units follow at residues 106–145, 148–187, 190–229, 232–271, 274–333, 336–375, and 378–410; these read GHRSPVTRVIFHPVFSVIVSASEDATIKVWDHETGDFERT, GHTDSVQDISFDHTGKLLASCSADMTIKLWDFQGFECIRT, GHDHNVSSVAIMPNGDHIVSASRDKTIKMWEVATGYCVKT, GHREWVRMVRPNQDGTLIASSSNDQTVRVWVVATKECKAE, EHEH…CLMT, GHDNWVRGVLVHPGGKYIVSCADDKTLRIWDYKNKRCTKT, and AHEHFVTSLDFHKTAPYVVTGSVDQTVKVWECR.

Belongs to the WD repeat LIS1/nudF family. Can self-associate. Component of the cytosolic PAF-AH (I) heterotetrameric enzyme, which is composed of PAFAH1B1 (beta), PAFAH1B2 (alpha2) and PAFAH1B3 (alpha1) subunits. The catalytic activity of the enzyme resides in the alpha1 (PAFAH1B3) and alpha2 (PAFAH1B2) subunits, whereas the beta subunit (PAFAH1B1) has regulatory activity. Trimer formation is not essential for the catalytic activity. Interacts with dynein, dynactin, nde1 and ndel1.

The protein resides in the cytoplasm. It localises to the cytoskeleton. The protein localises to the microtubule organizing center. It is found in the centrosome. Functionally, regulatory subunit (beta subunit) of the cytosolic type I platelet-activating factor (PAF) acetylhydrolase (PAF-AH (I)), an enzyme that catalyzes the hydrolyze of the acetyl group at the sn-2 position of PAF and its analogs and participates in PAF inactivation. Regulates the PAF-AH (I) activity in a catalytic dimer composition-dependent manner. Positively regulates the activity of the minus-end directed microtubule motor protein dynein. May enhance dynein-mediated microtubule sliding by targeting dynein to the microtubule plus end. Required for several dynein- and microtubule-dependent processes such as the maintenance of Golgi integrity, the peripheral transport of microtubule fragments and the coupling of the nucleus and centrosome. May be required for proliferation of neuronal precursors and neuronal migration. This Danio rerio (Zebrafish) protein is Lissencephaly-1 homolog A (pafah1b1a).